Here is a 433-residue protein sequence, read N- to C-terminus: Trigger factor (433 aa).

The region spanning Gly-163–Pro-248 is the PPIase FKBP-type domain.

It belongs to the FKBP-type PPIase family. Tig subfamily.

The protein localises to the cytoplasm. It carries out the reaction [protein]-peptidylproline (omega=180) = [protein]-peptidylproline (omega=0). Functionally, involved in protein export. Acts as a chaperone by maintaining the newly synthesized protein in an open conformation. Functions as a peptidyl-prolyl cis-trans isomerase. The chain is Trigger factor from Nitratidesulfovibrio vulgaris (strain ATCC 29579 / DSM 644 / CCUG 34227 / NCIMB 8303 / VKM B-1760 / Hildenborough) (Desulfovibrio vulgaris).